We begin with the raw amino-acid sequence, 940 residues long: MEEEEGAAAREWGATPAGPVWTAVFDYEAVGDEELTLRRGDRVQVLSQDCAVSGDEGWWTGQLPSGRVGVFPSNYVAPAAPAAPSDLQLPQEIPFHELQLEEIIGVGGFGKVYRAVWRGEEVAVKAARLDPERDPAVTAEQVRQEARLFGALQHPNIIALRGACLSPPNLCLVMEYARGGALSRVLAGRRVPPHVLVNWAVQVARGMNYLHNDAPVPIIHRDLKSINILILEAIENHNLADTVLKITDFGLAREWHKTTKMSAAGTYAWMAPEVIRLSLFSKSSDVWSFGVLLWELLTGEVPYREIDALAVAYGVAMNKLTLPIPSTCPEPFARLLEECWDPDPHGRPDFGSILKQLEVIEQSALFQMPLESFHSLQEDWKLEIQHMFDDLRTKEKELRSREEELLRAAQEQRFQEEQLRRREQELAEREMDIVERELHLLMSQLSQEKPRVRKRKGNFKRSRLLKLREGSSHISLPSGFEHKITVQASPTLDKRKGSDGASPPASPSIIPRLRAIRLTPMDCGGSSGSGTWSRSGPPKKEELVGGKKKGRTWGPSSTLQKERAGGEERLKALGEGSKQWSSSAPNLGKSPKHTPMAPGFASLNEMEEFAEADEGNNVPPSPYSTPSYLKVPLPAEPSPCVQAPWEPPAVTPSRPGHGARRRCDLALLSCATLLSAVGLGADVAEARAGDGEEQRRWLDSLFFPRPGRFPRGLSPTGRPGGRREDTAPGLGLAPSATLVSLSSVSDCNSTRSLLRSDSDEAAPAAPSPPPSPLAPSPSTNPLVDVELESFKKDPRQSLTPTHVTAAHAVSRGHRRTPSDGALRQREPLELTNHGPRDPLDFPRLPDPQALFPTRRRPLEFPGRPTTLTFAPRPRPAASRPRLDPWKLVSFGRTLSISPPSRPDTPESPGPPSVQPTLLDMDMEGQSQDNTVPLCGVYGSH.

The SH3 domain occupies 16–81 (PAGPVWTAVF…PSNYVAPAAP (66 aa)). One can recognise a Protein kinase domain in the interval 98–360 (LQLEEIIGVG…GSILKQLEVI (263 aa)). ATP-binding positions include 104–112 (IGVGGFGKV) and Lys-125. Asp-222 acts as the Proton acceptor in catalysis. Thr-258 bears the Phosphothreonine; by autocatalysis mark. The residue at position 262 (Ser-262) is a Phosphoserine; by autocatalysis and MAP4K1. Leucine-zipper stretches follow at residues 384–405 (IQHM…EEEL) and 419–440 (LRRR…ELHL). Disordered regions lie at residues 490-599 (PTLD…MAPG), 687-734 (RAGD…GLAP), and 749-917 (STRS…QPTL). Phosphoserine occurs at positions 498, 502, and 506. The span at 501-511 (ASPPASPSIIP) shows a compositional bias: low complexity. The residue at position 552 (Thr-552) is a Phosphothreonine. 2 stretches are compositionally biased toward basic and acidic residues: residues 560–572 (QKER…RLKA) and 687–698 (RAGDGEEQRRWL). Positions 765 to 775 (APSPPPSPLAP) are enriched in pro residues. Residues 822 to 840 (LRQREPLELTNHGPRDPLD) show a composition bias toward basic and acidic residues. Arg-843 carries the omega-N-methylarginine modification. Residues 899–913 (PSRPDTPESPGPPSV) are compositionally biased toward pro residues.

Belongs to the protein kinase superfamily. STE Ser/Thr protein kinase family. MAP kinase kinase kinase subfamily. As to quaternary structure, homodimer. Interacts with SH3RF2. The cofactor is Mg(2+). Autophosphorylation on serine and threonine residues within the activation loop plays a role in enzyme activation.

The catalysed reaction is L-seryl-[protein] + ATP = O-phospho-L-seryl-[protein] + ADP + H(+). The enzyme catalyses L-threonyl-[protein] + ATP = O-phospho-L-threonyl-[protein] + ADP + H(+). Homodimerization via the leucine zipper domains is required for autophosphorylation and subsequent activation. Its function is as follows. Activates the JUN N-terminal pathway. In Mus musculus (Mouse), this protein is Mitogen-activated protein kinase kinase kinase 10 (Map3k10).